The chain runs to 320 residues: Cyclin-D6-1 (320 aa).

Positions 279-320 are disordered; it reads HHRSASSESERTTTVGSAANSADAKRRCMGPPRQWGVGGPDE.

Belongs to the cyclin family. Cyclin D subfamily.

This Oryza sativa subsp. japonica (Rice) protein is Cyclin-D6-1 (CYCD6-1).